Here is a 212-residue protein sequence, read N- to C-terminus: Large ribosomal subunit protein mL48 (212 aa).

Residues 1-28 constitute a mitochondrion transit peptide; the sequence is MNGALGKVLCLKNDTIFKQAFSLLRFRT. Lysine 199 carries the post-translational modification N6-succinyllysine.

It belongs to the mitochondrion-specific ribosomal protein mL48 family. As to quaternary structure, component of the mitochondrial ribosome large subunit (39S) which comprises a 16S rRNA and about 50 distinct proteins. Interacts with OXA1L.

The protein localises to the mitochondrion. In Bos taurus (Bovine), this protein is Large ribosomal subunit protein mL48 (MRPL48).